The primary structure comprises 124 residues: Fluoride-specific ion channel FluC (124 aa).

Transmembrane regions (helical) follow at residues 1 to 21 (MIGVTLAVAVGGALGCLLRFA), 34 to 54 (FYAATLAVNIAGCLLIGYLYG), 62 to 82 (VPLALRAGLIAGFLGGLTTFS), and 101 to 121 (FSYLAFSVLGGLLATWAGLIL). Positions 76 and 79 each coordinate Na(+).

This sequence belongs to the fluoride channel Fluc/FEX (TC 1.A.43) family.

The protein resides in the cell inner membrane. It catalyses the reaction fluoride(in) = fluoride(out). Its activity is regulated as follows. Na(+) is not transported, but it plays an essential structural role and its presence is essential for fluoride channel function. In terms of biological role, fluoride-specific ion channel. Important for reducing fluoride concentration in the cell, thus reducing its toxicity. This Azotobacter vinelandii (strain DJ / ATCC BAA-1303) protein is Fluoride-specific ion channel FluC.